The following is a 566-amino-acid chain: MSGRLGELLVRENLISVQQLRKAQEEQQKNGTRIGTALVKTGAIEESKLTDFLSKQYGVPAINLKDFDVEPDIIKLVPKEVAEKHLVVPVNRAGPSLIVAMCDPSNIFAVDDLKFLTGYNIETVVASEVSIREAIERYYAEKGPSLEDIVGDVGDDIEVTKEETENIDEMAKAADDAPVVKLVNLILMDAIKKRASDIHVEPYEKDFRVRFRIDGVMYEVMRPPMKLRNAITSRLKIMASLDISERRLPQDGRIKIKMGGGKEMDFRVSVCPTLFGEKVVMRLLDKSNLQLDMTKLGFDAQPLAWFKEAIDRPYGMVLVTGPTGSGKTTTLYSALSSLNGLDTNICTAEDPVEFNFAGINQVQMHDDIGLNFAAALRSFLRQDPDIIMIGEIRDFETAEIGVKAALTGHLVLSTLHTNDAPGTVSRLLNMGIEPFLVTASLNLILAQRLARRLCPACKKPAENVDEQALIDAGVPPDKIGTFTMYEKVGCRDCNDRGYRGRVAIYEVMPFWDGLKELVINGASAAELKQEAIRLGMSSLRMSGLRKMMDGATTLEEVVGNTAPDRF.

321–328 (GPTGSGKT) lines the ATP pocket. The Zn(2+) site is built by cysteine 454, cysteine 457, cysteine 490, and cysteine 493.

Belongs to the GSP E family. Homohexamer. Interacts with PilC. Interacts with PilM.

Its subcellular location is the cytoplasm. Its function is as follows. ATPase component of the type IV pilus (T4P) that plays a role in surface and host cell adhesion, colonization, biofilm maturation, virulence, and twitching, a form of surface-associated motility facilitated by cycles of extension, adhesion, and retraction of T4P fibers. Acts as a molecular motor to provide the energy that is required for biogenesis of the pilus and the extrusion of substrates generated in the cytoplasm. PilB ATPase activity is also essential for T4P extension while antagonist PilT ATPase activity is required for T4P retraction. In addition, functions as a regulator of exopolysaccharide (EPS) downstream of the T4P filament and upstream of the Dif signaling. This Myxococcus xanthus (strain DK1622) protein is Type IV pilus assembly ATPase PilB (pilB).